The primary structure comprises 1082 residues: Protein argonaute 1A (1082 aa).

2 disordered regions span residues 17–148 (MMRK…ASQD) and 187–208 (GQSP…VRFP). The segment covering 29-38 (GESSGTQQAT) has biased composition (polar residues). Residues 72–100 (GRGGGQHQGRGGRYQGRGGPTSHQPGGGP) show a composition bias toward gly residues. One can recognise a PAZ domain in the interval 420 to 533 (PVIDFVAQLL…LPMEVCKIVE (114 aa)). Residues 709–1030 (LLIAILPDNN…AAFRARFYME (322 aa)) form the Piwi domain. The tract at residues 1036 to 1065 (SGSMASGAHTRGGGPLPGARSTKPAGNVAV) is disordered.

This sequence belongs to the argonaute family. Ago subfamily.

Probably involved in the RNA silencing pathway. May bind to short RNAs such as microRNAs (miRNAs) or short interfering RNAs (siRNAs), and represses the translation of mRNAs which are complementary to them. The protein is Protein argonaute 1A (AGO1A) of Oryza sativa subsp. japonica (Rice).